The following is an 87-amino-acid chain: Small ribosomal subunit protein bS20 (87 aa).

Residues 1–22 (MANHKSALKRHKQSLKRAARNR) form a disordered region.

This sequence belongs to the bacterial ribosomal protein bS20 family.

Binds directly to 16S ribosomal RNA. This Nitratidesulfovibrio vulgaris (strain DP4) (Desulfovibrio vulgaris) protein is Small ribosomal subunit protein bS20.